Consider the following 553-residue polypeptide: Solute carrier family 22 member 4 (553 aa).

The Cytoplasmic portion of the chain corresponds to 1–20 (MRDYDEVIAFLGEWGPFQRL). A helical transmembrane segment spans residues 21-41 (IFFLLSASIIPNGFNGMSVVF). At 42 to 142 (LAGTPEHRCL…NLVCEDDWKT (101 aa)) the chain is on the extracellular side. N-linked (GlcNAc...) asparagine glycosylation is found at N57, N64, and N91. The chain crosses the membrane as a helical span at residues 143 to 163 (PLTTSLFFVGVLCGSFVSGQL). Topologically, residues 164 to 171 (SDRFGRKK) are cytoplasmic. The chain crosses the membrane as a helical span at residues 172-192 (VLFATMAVQTGFSFVQIFSTN). The Extracellular portion of the chain corresponds to 193–197 (WEMFT). A helical membrane pass occupies residues 198–218 (VLFAIVGMGQISNYVVAFILG). Position 218–225 (218–225 (GTEILSKS)) interacts with ATP. At 219-232 (TEILSKSVRIIFST) the chain is on the cytoplasmic side. A helical membrane pass occupies residues 233–253 (LGVCTFFAIGYMVLPLFAYFI). At 254 to 257 (RDWR) the chain is on the extracellular side. Residues 258-278 (MLLLALTLPGLFCVPLWWFIP) form a helical membrane-spanning segment. Residues 279 to 339 (ESPRWLISQR…IILDLFRTRN (61 aa)) are Cytoplasmic-facing. A helical transmembrane segment spans residues 340–360 (IATITVMAVMLWMLTSVGYFA). At 361 to 373 (LSLNVPNLHGDVY) the chain is on the extracellular side. Residues 374–394 (LNCFLSGLIEVPAYFTAWLLL) traverse the membrane as a helical segment. The Cytoplasmic segment spans residues 395–400 (RTLPRR). Residues 401-421 (YIIAGVLFWGGGVLLLIQVVP) traverse the membrane as a helical segment. Topologically, residues 422–428 (EDYNFVS) are extracellular. The chain crosses the membrane as a helical span at residues 429-449 (IGLVMLGKFGITSAFSMLYVF). Residues 450–462 (TAELYPTLVRNMA) are Cytoplasmic-facing. The chain crosses the membrane as a helical span at residues 463–483 (VGITSMASRVGSIIAPYFVYL). Topologically, residues 484–488 (GAYNR) are extracellular. The helical transmembrane segment at 489–509 (LLPYILMGSLTVLIGIITLFF) threads the bilayer. The Cytoplasmic portion of the chain corresponds to 510-553 (PESFGVTLPENLEQMQKVRGFRCGKKSTVSVDREESPKVLITAF).

It belongs to the major facilitator (TC 2.A.1) superfamily. Organic cation transporter (TC 2.A.1.19) family. In terms of assembly, interacts with PDZK1. In terms of tissue distribution, expressed in kidney. Expressed in small intestines. Expressed in liver in non-parenchymal liver tissue such as sinusoidal vessels. Weakly expressed in lung and brain. Expressed in testis and spleen. Expressed in heart.

The protein resides in the apical cell membrane. It is found in the mitochondrion membrane. The protein localises to the basal cell membrane. The enzyme catalyses ergothioneine(out) + Na(+)(out) = ergothioneine(in) + Na(+)(in). It catalyses the reaction acetylcholine(in) = acetylcholine(out). The catalysed reaction is (R)-carnitine(out) + Na(+)(out) = (R)-carnitine(in) + Na(+)(in). It carries out the reaction glycine betaine(out) + Na(+)(out) = glycine betaine(in) + Na(+)(in). Allosterically activated by intracellular ATP. Transporter that mediates the transport of endogenous and microbial zwitterions and organic cations. Functions as a Na(+)-dependent and pH-dependent high affinity microbial symporter of potent food-derived antioxidant ergothioeine. Transports one sodium ion with one ergothioeine molecule. Involved in the absorption of ergothioneine from the luminal/apical side of the small intestine and renal tubular cells, and into non-parenchymal liver cells, thereby contributing to maintain steady-state ergothioneine level in the body. Also mediates the bidirectional transport of acetycholine, although the exact transport mechanism has not been fully identified yet. Most likely exports anti-inflammatory acetylcholine in non-neuronal tissues, thereby contributing to the non-neuronal cholinergic system. Displays a general physiological role linked to better survival by controlling inflammation and oxidative stress, which may be related to ergothioneine and acetycholine transports. May also function as a low-affinity Na(+)-dependent transporter of L-carnitine through the mitochondrial membrane, thereby maintaining intracellular carnitine homeostasis. May contribute to regulate the transport of cationic compounds in testis across the blood-testis-barrier. The polypeptide is Solute carrier family 22 member 4 (Mus musculus (Mouse)).